A 61-amino-acid chain; its full sequence is Metallothionein-1A (61 aa).

An N-acetylmethionine modification is found at Met1. A beta region spans residues 1–29 (MDPNCSCPTGGSCSCAGSCTCKACRCTSC). Positions 5, 7, 13, 15, 19, 21, 24, 26, 29, 33, 34, 36, 37, 41, 44, 48, 50, and 57 each coordinate a divalent metal cation. The tract at residues 30 to 61 (KKSCCSCCPAGCARCAQGCICKGASDKCSCCA) is alpha. The residue at position 58 (Ser58) is a Phosphoserine. 2 residues coordinate a divalent metal cation: Cys59 and Cys60.

Belongs to the metallothionein superfamily. Type 1 family. In terms of assembly, monomer.

Functionally, metallothioneins have a high content of cysteine residues that bind various heavy metals; these proteins are transcriptionally regulated by both heavy metals and glucocorticoids. This Sus scrofa (Pig) protein is Metallothionein-1A (MT1A).